The sequence spans 236 residues: Small ribosomal subunit protein eS6 (236 aa).

Phosphoserine is present on residues S232 and S233.

It belongs to the eukaryotic ribosomal protein eS6 family. Post-translationally, phosphorylated.

The sequence is that of Small ribosomal subunit protein eS6 (RPS6) from Eremothecium gossypii (strain ATCC 10895 / CBS 109.51 / FGSC 9923 / NRRL Y-1056) (Yeast).